Here is a 502-residue protein sequence, read N- to C-terminus: Arginine-specific demethylase JMJ22 (502 aa).

The disordered stretch occupies residues 15–45; the sequence is KSKSKRLKLHQHEPESLFPEKEVEEEDEDEG. Over residues 24–35 the composition is skewed to basic and acidic residues; sequence HQHEPESLFPEK. The F-box domain maps to 80 to 126; the sequence is LGNLQILSDELVLDILGLLGANHLGVLATVTKSFYIFANHEPLWRNL. The region spanning 279–439 is the JmjC domain; sequence EKVPVLDSEY…NVLEFLKKPN (161 aa). Fe cation-binding residues include His-324, Asp-326, and His-407.

Belongs to the JARID1 histone demethylase family. Requires Fe(2+) as cofactor. As to expression, expressed in inflorescences, roots and siliques, and, at low levels, in leaves and stems.

The protein localises to the nucleus. The catalysed reaction is N(omega),N(omega)-dimethyl-L-arginyl-[protein] + 2-oxoglutarate + O2 = N(omega)-methyl-L-arginyl-[protein] + formaldehyde + succinate + CO2. Its function is as follows. Histone demethylase that demethylates 'Arg-3' (H4R3me) of histone H4 with a specific activity for H4R3me2. Involved in the positive regulation of gene expression. Together with JMJ20, positively regulates seed germination by promoting the removal of repressive histone arginine methylations (e.g. H4R3me2) at GA3ox1 and GA3ox2 to trigger gibberellic acid (GA) biosynthesis. The sequence is that of Arginine-specific demethylase JMJ22 from Arabidopsis thaliana (Mouse-ear cress).